Here is a 635-residue protein sequence, read N- to C-terminus: Threonine--tRNA ligase (635 aa).

A TGS domain is found at 1-61 (MISIRLKDGS…KEDGCLELLD (61 aa)). The tract at residues 242–532 (DHRRLGRELG…LTEHFGGAFP (291 aa)) is catalytic. Zn(2+)-binding residues include Cys-333, His-384, and His-509.

Belongs to the class-II aminoacyl-tRNA synthetase family. As to quaternary structure, homodimer. Zn(2+) serves as cofactor.

It localises to the cytoplasm. It catalyses the reaction tRNA(Thr) + L-threonine + ATP = L-threonyl-tRNA(Thr) + AMP + diphosphate + H(+). Its function is as follows. Catalyzes the attachment of threonine to tRNA(Thr) in a two-step reaction: L-threonine is first activated by ATP to form Thr-AMP and then transferred to the acceptor end of tRNA(Thr). Also edits incorrectly charged L-seryl-tRNA(Thr). The protein is Threonine--tRNA ligase of Syntrophomonas wolfei subsp. wolfei (strain DSM 2245B / Goettingen).